Consider the following 593-residue polypeptide: UvrABC system protein C (593 aa).

The 78-residue stretch at 17–94 (MEPGCYLMKD…IKQYQPRYNI (78 aa)) folds into the GIY-YIG domain. The UVR domain maps to 199-234 (KTILKSLEERMLTASESLDFERAKEYRDLIQHIQNL).

The protein belongs to the UvrC family. In terms of assembly, interacts with UvrB in an incision complex.

The protein localises to the cytoplasm. In terms of biological role, the UvrABC repair system catalyzes the recognition and processing of DNA lesions. UvrC both incises the 5' and 3' sides of the lesion. The N-terminal half is responsible for the 3' incision and the C-terminal half is responsible for the 5' incision. The chain is UvrABC system protein C from Staphylococcus aureus (strain bovine RF122 / ET3-1).